Reading from the N-terminus, the 158-residue chain is Large ribosomal subunit protein mL50 (158 aa).

The protein belongs to the mitochondrion-specific ribosomal protein mL50 family. In terms of assembly, component of the mitochondrial large ribosomal subunit (mt-LSU). Mature mammalian 55S mitochondrial ribosomes consist of a small (28S) and a large (39S) subunit. The 28S small subunit contains a 12S ribosomal RNA (12S mt-rRNA) and 30 different proteins. The 39S large subunit contains a 16S rRNA (16S mt-rRNA), a copy of mitochondrial valine transfer RNA (mt-tRNA(Val)), which plays an integral structural role, and 52 different proteins.

It is found in the mitochondrion. In Homo sapiens (Human), this protein is Large ribosomal subunit protein mL50 (MRPL50).